The primary structure comprises 620 residues: Translation initiation factor IF-2 (620 aa).

Residues 119-288 (ERPPIVTIMG…IILISELENL (170 aa)) form the tr-type G domain. The G1 stretch occupies residues 128–135 (GHVDHGKT). Residue 128–135 (GHVDHGKT) participates in GTP binding. The interval 153–157 (GITQA) is G2. Residues 175-178 (DTPG) are G3. GTP is bound by residues 175–179 (DTPGH) and 229–232 (NKID). A G4 region spans residues 229–232 (NKID). Residues 265–267 (SAI) are G5.

This sequence belongs to the TRAFAC class translation factor GTPase superfamily. Classic translation factor GTPase family. IF-2 subfamily.

It localises to the cytoplasm. One of the essential components for the initiation of protein synthesis. Protects formylmethionyl-tRNA from spontaneous hydrolysis and promotes its binding to the 30S ribosomal subunits. Also involved in the hydrolysis of GTP during the formation of the 70S ribosomal complex. The chain is Translation initiation factor IF-2 from Mycoplasma capricolum subsp. capricolum (strain California kid / ATCC 27343 / NCTC 10154).